Reading from the N-terminus, the 339-residue chain is MTKIAVLGNGSWGSVLGSMLADNGNDVVLYGNIESVNDEINATHTNSHYMKDWKLNENTRATGDLEDALDGAEVVLFVLPTKAVRIVAKNVREILDKSGAKPLLVTATKGIEPGTKKLISEILTDEIYPNDEDKIVAISGPSHAENVAQKDLTAIACASTNEENAKKVQKLFSNDYVRFYTNDDLVGVEVGGAVKNVIAIAAGILVGQGYGDDAKAALMTRGLAEITRLGVNYFGAKPMTFSGLSGIGDLIVTCTSVNSRNWRAGKQIGEGKSLDYVLKNMGQVVEGATTVKAVHELCEEKNIDMPISEAIYRVLYEGTDVETEIKKMMGRAPKPEIRL.

The NADPH site is built by S11, W12, and K109. Residues K109, G140, and S142 each coordinate sn-glycerol 3-phosphate. Residue A144 participates in NADPH binding. Positions 195, 249, 259, 260, and 261 each coordinate sn-glycerol 3-phosphate. Residue K195 is the Proton acceptor of the active site. R260 is a binding site for NADPH. The NADPH site is built by V284 and E286.

It belongs to the NAD-dependent glycerol-3-phosphate dehydrogenase family.

It is found in the cytoplasm. The enzyme catalyses sn-glycerol 3-phosphate + NAD(+) = dihydroxyacetone phosphate + NADH + H(+). The catalysed reaction is sn-glycerol 3-phosphate + NADP(+) = dihydroxyacetone phosphate + NADPH + H(+). The protein operates within membrane lipid metabolism; glycerophospholipid metabolism. In terms of biological role, catalyzes the reduction of the glycolytic intermediate dihydroxyacetone phosphate (DHAP) to sn-glycerol 3-phosphate (G3P), the key precursor for phospholipid synthesis. This chain is Glycerol-3-phosphate dehydrogenase [NAD(P)+], found in Lactobacillus acidophilus (strain ATCC 700396 / NCK56 / N2 / NCFM).